The primary structure comprises 402 residues: Zinc finger protein 809 (402 aa).

The KRAB domain occupies 4–75 (VSFEDVAVDF…AEASSRSLPG (72 aa)). The tract at residues 118-139 (QEVSKGTTSRHRRAPVKSLCRK) is disordered. Residues 125–139 (TSRHRRAPVKSLCRK) show a composition bias toward basic residues. 7 consecutive C2H2-type zinc fingers follow at residues 155-178 (YECK…RRTH), 184-206 (YECD…QKTH), 213-235 (YECS…ERTH), 241-263 (YECT…KKTH), 269-291 (FKCE…QKKH), 297-319 (YECT…RIAH), and 325-347 (YECK…QKRH).

Belongs to the krueppel C2H2-type zinc-finger protein family.

It is found in the nucleus. Its function is as follows. Transcription factor specifically required to repress retrotransposons in embryonic stem cells. Recognizes and binds retroviral DNA sequences from a large subset of mammalian retroviruses and retroelements and repress their expression by recruiting a repressive complex containing TRIM28/KAP1. The sequence is that of Zinc finger protein 809 from Mus musculus (Mouse).